Reading from the N-terminus, the 140-residue chain is CDGSH iron-sulfur domain-containing protein 2 homolog (140 aa).

The Lumenal portion of the chain corresponds to 1–35 (MEAIAKLIKVQLPNYLQKLPVPSSLSGFAELSPSD). A helical transmembrane segment spans residues 36–59 (AIAVVFPFAVVSWLIGYSTYKFFQ). Residues 60-140 (PKAVELPPSP…GPLIVKGKAN (81 aa)) are Cytoplasmic-facing. Residues Cys-104, Cys-106, Cys-115, and His-119 each contribute to the [2Fe-2S] cluster site.

Belongs to the CISD protein family. CISD2 subfamily. Requires [2Fe-2S] cluster as cofactor.

It localises to the endoplasmic reticulum membrane. This Trichoplax adhaerens (Trichoplax reptans) protein is CDGSH iron-sulfur domain-containing protein 2 homolog.